A 162-amino-acid polypeptide reads, in one-letter code: SsrA-binding protein (162 aa).

It belongs to the SmpB family.

The protein resides in the cytoplasm. In terms of biological role, required for rescue of stalled ribosomes mediated by trans-translation. Binds to transfer-messenger RNA (tmRNA), required for stable association of tmRNA with ribosomes. tmRNA and SmpB together mimic tRNA shape, replacing the anticodon stem-loop with SmpB. tmRNA is encoded by the ssrA gene; the 2 termini fold to resemble tRNA(Ala) and it encodes a 'tag peptide', a short internal open reading frame. During trans-translation Ala-aminoacylated tmRNA acts like a tRNA, entering the A-site of stalled ribosomes, displacing the stalled mRNA. The ribosome then switches to translate the ORF on the tmRNA; the nascent peptide is terminated with the 'tag peptide' encoded by the tmRNA and targeted for degradation. The ribosome is freed to recommence translation, which seems to be the essential function of trans-translation. In Sorangium cellulosum (strain So ce56) (Polyangium cellulosum (strain So ce56)), this protein is SsrA-binding protein.